Reading from the N-terminus, the 126-residue chain is Protein ApaG (126 aa).

Residues 2–126 (KQLESSIRIE…FRLAAPGLLH (125 aa)) enclose the ApaG domain.

The sequence is that of Protein ApaG from Shewanella loihica (strain ATCC BAA-1088 / PV-4).